We begin with the raw amino-acid sequence, 133 residues long: uncharacterized protein (133 aa).

It belongs to the ycf68 family.

It localises to the plastid. It is found in the chloroplast. This is an uncharacterized protein from Oryza sativa subsp. japonica (Rice).